An 874-amino-acid chain; its full sequence is Alanine--tRNA ligase (874 aa).

Positions 563, 567, 665, and 669 each coordinate Zn(2+).

This sequence belongs to the class-II aminoacyl-tRNA synthetase family. Zn(2+) is required as a cofactor.

Its subcellular location is the cytoplasm. The enzyme catalyses tRNA(Ala) + L-alanine + ATP = L-alanyl-tRNA(Ala) + AMP + diphosphate. In terms of biological role, catalyzes the attachment of alanine to tRNA(Ala) in a two-step reaction: alanine is first activated by ATP to form Ala-AMP and then transferred to the acceptor end of tRNA(Ala). Also edits incorrectly charged Ser-tRNA(Ala) and Gly-tRNA(Ala) via its editing domain. The polypeptide is Alanine--tRNA ligase (Histophilus somni (strain 129Pt) (Haemophilus somnus)).